The following is a 293-amino-acid chain: Acetylglutamate kinase (293 aa).

Substrate contacts are provided by residues Gly-66 to Gly-67, Arg-88, and Asn-190.

Belongs to the acetylglutamate kinase family. ArgB subfamily.

The protein resides in the cytoplasm. It catalyses the reaction N-acetyl-L-glutamate + ATP = N-acetyl-L-glutamyl 5-phosphate + ADP. The protein operates within amino-acid biosynthesis; L-arginine biosynthesis; N(2)-acetyl-L-ornithine from L-glutamate: step 2/4. Catalyzes the ATP-dependent phosphorylation of N-acetyl-L-glutamate. The chain is Acetylglutamate kinase from Thiobacillus denitrificans (strain ATCC 25259 / T1).